We begin with the raw amino-acid sequence, 450 residues long: MKKGLVVDLSKAAPYLKSHEVAYMQETINQAHNKLHNGTGAGNDFLGWVDLPVNYDKDEFARIKEAAKKIQSDSDVLVVIGIGGSYLGARAAIEMLTNNFYNSMSKDKRKTPAIFYAGNNISSSYMADLLKAIDGLDVSLNVISKSGTTTEPAIAFRILKDYMEKKYGKEEAKKRIYATTDAKKGALKTLADAEGYETFVIPDDVGGRFSVLTAVGLLPIAAAGINIDEMMEGAADAREEYANPSLADNECYKYAAARNALYNKGKAIEILVNYEPSVHYFNEWWKQLYGESEGKDNKGLFPAAVDFSTDLHSMGQYIQEGRRDIFETVINVGSPREEIVIEANDENIDGLNFLAGKTMDYVNKQAFRGTLLAHNDGEVPNVVVNVPELTPYYFGRLVYFFEKACGISGYVLGINPFDQPGVEAYKKNMFALLGKPGFEDLKAELEERLK.

The active-site Proton donor is Glu-291. Active-site residues include His-312 and Lys-426.

Belongs to the GPI family.

It localises to the cytoplasm. The catalysed reaction is alpha-D-glucose 6-phosphate = beta-D-fructose 6-phosphate. It functions in the pathway carbohydrate biosynthesis; gluconeogenesis. Its pathway is carbohydrate degradation; glycolysis; D-glyceraldehyde 3-phosphate and glycerone phosphate from D-glucose: step 2/4. In terms of biological role, catalyzes the reversible isomerization of glucose-6-phosphate to fructose-6-phosphate. The sequence is that of Glucose-6-phosphate isomerase from Clostridium perfringens (strain ATCC 13124 / DSM 756 / JCM 1290 / NCIMB 6125 / NCTC 8237 / Type A).